The sequence spans 97 residues: Co-chaperonin GroES (97 aa).

This sequence belongs to the GroES chaperonin family. As to quaternary structure, heptamer of 7 subunits arranged in a ring. Interacts with the chaperonin GroEL.

The protein resides in the cytoplasm. In terms of biological role, together with the chaperonin GroEL, plays an essential role in assisting protein folding. The GroEL-GroES system forms a nano-cage that allows encapsulation of the non-native substrate proteins and provides a physical environment optimized to promote and accelerate protein folding. GroES binds to the apical surface of the GroEL ring, thereby capping the opening of the GroEL channel. The protein is Co-chaperonin GroES of Stutzerimonas stutzeri (Pseudomonas stutzeri).